Consider the following 297-residue polypeptide: Acetylglutamate kinase (297 aa).

Residues 70-71 (GG), Arg92, and Asn194 each bind substrate.

It belongs to the acetylglutamate kinase family. ArgB subfamily.

Its subcellular location is the cytoplasm. It catalyses the reaction N-acetyl-L-glutamate + ATP = N-acetyl-L-glutamyl 5-phosphate + ADP. It participates in amino-acid biosynthesis; L-arginine biosynthesis; N(2)-acetyl-L-ornithine from L-glutamate: step 2/4. In terms of biological role, catalyzes the ATP-dependent phosphorylation of N-acetyl-L-glutamate. The chain is Acetylglutamate kinase from Herminiimonas arsenicoxydans.